The primary structure comprises 224 residues: Giant hemoglobin linker AV-1 chain (224 aa).

In terms of domain architecture, LDL-receptor class A spans 62 to 103 (HWCPSKYHRCGNSPQCMSNMAFCDGVNDCKNHFDEDENRCVV). Cystine bridges form between Cys-64/Cys-77, Cys-71/Cys-90, and Cys-84/Cys-101. Asn-108 carries an N-linked (GlcNAc...) asparagine glycan.

As to quaternary structure, giant hemoglobin is composed of four heme-containing chains (AI to AIV), and two linker chains (AV and AVI).

Acts as a linker for the assembly of heme-containing chains in the construction of giant hemoglobin. The chain is Giant hemoglobin linker AV-1 chain from Lamellibrachia sp. (Deep-sea giant tube worm).